A 464-amino-acid polypeptide reads, in one-letter code: Protein FAM90A1 (464 aa).

5 disordered regions span residues 1 to 43, 71 to 294, 312 to 386, 412 to 437, and 445 to 464; these read MMAR…PRLK, PNFG…KRSA, PFQI…AASH, PSFH…SEGP, and VLYE…SDLE. Composition is skewed to basic and acidic residues over residues 74-83 and 97-114; these read GEKEGKENLK and NKDK…DPQR. The span at 180–197 shows a compositional bias: low complexity; it reads LASLSPLRKASLSSSSSL. Polar residues predominate over residues 344 to 355; the sequence is TSPQTGTRTPAQ.

This sequence belongs to the FAM90 family.

This Homo sapiens (Human) protein is Protein FAM90A1 (FAM90A1).